Consider the following 277-residue polypeptide: Myelin proteolipid protein (277 aa).

At 1 to 10 the chain is on the cytoplasmic side; sequence MGLLECCARC. Residues Cys-6, Cys-7, and Cys-10 are each lipidated (S-palmitoyl cysteine). A helical transmembrane segment spans residues 11-36; that stretch reads LVGAPFASLVATGLCFFGVALFCGCG. At 37–59 the chain is on the extracellular side; that stretch reads HEALTGTEKLIETYFSKNYQDYE. Residues 60–88 form a helical membrane-spanning segment; that stretch reads YLINVIHAFQYVIYGTASFFFLYGALLLA. The Cytoplasmic segment spans residues 89 to 151; sequence EGFYTTGAVR…LGKWLGHPDK (63 aa). Cys-109 is lipidated: S-palmitoyl cysteine. Ser-114 is subject to Phosphoserine. Phosphothreonine is present on residues Thr-116 and Thr-118. Residues Cys-139 and Cys-141 are each lipidated (S-palmitoyl cysteine). A helical transmembrane segment spans residues 152 to 178; it reads FVGITYALTIVWLLVFACSAVPVYIYF. Over 179–238 the chain is Extracellular; the sequence is NTWTTCQSIAFPSKTSASIGSLCADARMYGVLPWNAFPGKVCGSNLLSICKTAEFQMTFH. Disulfide bonds link Cys-184-Cys-228 and Cys-201-Cys-220. A lipid anchor (O-palmitoyl serine) is attached at Ser-199. Residues 239-268 form a helical membrane-spanning segment; it reads LFIAAFVGAAATLVSLLTFMIAATYNFAVL. The Cytoplasmic portion of the chain corresponds to 269 to 277; sequence KLMGRGTKF.

The protein belongs to the myelin proteolipid protein family.

The protein localises to the cell membrane. It is found in the myelin membrane. This is the major myelin protein from the central nervous system. It plays an important role in the formation or maintenance of the multilamellar structure of myelin. This is Myelin proteolipid protein (PLP1) from Canis lupus familiaris (Dog).